The following is a 363-amino-acid chain: LIM and cysteine-rich domains protein 1 (363 aa).

Phosphoserine is present on Ser16. The 108-residue stretch at 99–206 (MIMTNPIATG…GEVALPGQGG (108 aa)) folds into the PET domain. The disordered stretch occupies residues 200-234 (ALPGQGGLPKEEGKQQEKPEGAETAPPTTNGSIGD). The span at 208-220 (PKEEGKQQEKPEG) shows a compositional bias: basic and acidic residues. LIM zinc-binding domains lie at 239 to 304 (YVCE…SLRP) and 305 to 363 (RCSG…SKRS).

In terms of assembly, interacts with beta-dystroglycan. Interacts with GATA1, GATA4 and GATA6.

The protein resides in the cytoplasm. The protein localises to the nucleus. Transcriptional cofactor that restricts GATA6 function by inhibiting DNA-binding, resulting in repression of GATA6 transcriptional activation of downstream target genes. Represses GATA6-mediated trans activation of lung- and cardiac tissue-specific promoters. Inhibits DNA-binding by GATA4 and GATA1 to the cTNC promoter. Plays a critical role in the development of cardiac hypertrophy via activation of calcineurin/nuclear factor of activated T-cells signaling pathway. In Bos taurus (Bovine), this protein is LIM and cysteine-rich domains protein 1 (LMCD1).